The primary structure comprises 278 residues: Tryptophan 2,3-dioxygenase (278 aa).

Substrate is bound by residues 47 to 51, Tyr110, and Arg114; that span reads FIIQH. A heme-binding site is contributed by His236. Residue Thr250 coordinates substrate.

The protein belongs to the tryptophan 2,3-dioxygenase family. As to quaternary structure, homotetramer. It depends on heme as a cofactor.

It catalyses the reaction L-tryptophan + O2 = N-formyl-L-kynurenine. The protein operates within amino-acid degradation; L-tryptophan degradation via kynurenine pathway; L-kynurenine from L-tryptophan: step 1/2. Its function is as follows. Heme-dependent dioxygenase that catalyzes the oxidative cleavage of the L-tryptophan (L-Trp) pyrrole ring and converts L-tryptophan to N-formyl-L-kynurenine. Catalyzes the oxidative cleavage of the indole moiety. In Ruegeria pomeroyi (strain ATCC 700808 / DSM 15171 / DSS-3) (Silicibacter pomeroyi), this protein is Tryptophan 2,3-dioxygenase.